The chain runs to 386 residues: Heat-inducible transcription repressor HrcA (386 aa).

The protein belongs to the HrcA family.

Its function is as follows. Negative regulator of class I heat shock genes (grpE-dnaK-dnaJ and groELS operons). Prevents heat-shock induction of these operons. This is Heat-inducible transcription repressor HrcA from Chlamydia caviae (strain ATCC VR-813 / DSM 19441 / 03DC25 / GPIC) (Chlamydophila caviae).